Reading from the N-terminus, the 170-residue chain is NAD(P)H-quinone oxidoreductase subunit I, chloroplastic (170 aa).

4Fe-4S ferredoxin-type domains lie at glycine 55–lysine 84 and leucine 95–glutamate 124. The [4Fe-4S] cluster site is built by cysteine 64, cysteine 67, cysteine 70, cysteine 74, cysteine 104, cysteine 107, cysteine 110, and cysteine 114.

This sequence belongs to the complex I 23 kDa subunit family. NDH is composed of at least 16 different subunits, 5 of which are encoded in the nucleus. The cofactor is [4Fe-4S] cluster.

It is found in the plastid. It localises to the chloroplast thylakoid membrane. The enzyme catalyses a plastoquinone + NADH + (n+1) H(+)(in) = a plastoquinol + NAD(+) + n H(+)(out). It catalyses the reaction a plastoquinone + NADPH + (n+1) H(+)(in) = a plastoquinol + NADP(+) + n H(+)(out). NDH shuttles electrons from NAD(P)H:plastoquinone, via FMN and iron-sulfur (Fe-S) centers, to quinones in the photosynthetic chain and possibly in a chloroplast respiratory chain. The immediate electron acceptor for the enzyme in this species is believed to be plastoquinone. Couples the redox reaction to proton translocation, and thus conserves the redox energy in a proton gradient. This is NAD(P)H-quinone oxidoreductase subunit I, chloroplastic from Spinacia oleracea (Spinach).